A 474-amino-acid chain; its full sequence is tRNA-2-methylthio-N(6)-dimethylallyladenosine synthase (474 aa).

In terms of domain architecture, MTTase N-terminal spans 3 to 120 (KKLHIKTWGC…LPEMIEQVRR (118 aa)). [4Fe-4S] cluster is bound by residues Cys12, Cys49, Cys83, Cys157, Cys161, and Cys164. The Radical SAM core domain maps to 143–375 (RAEGPTAFVS…QDRITQQAMR (233 aa)). The region spanning 378-441 (RHMMGTVQRI…TNSLRGKFIR (64 aa)) is the TRAM domain.

This sequence belongs to the methylthiotransferase family. MiaB subfamily. Monomer. [4Fe-4S] cluster is required as a cofactor.

The protein resides in the cytoplasm. It carries out the reaction N(6)-dimethylallyladenosine(37) in tRNA + (sulfur carrier)-SH + AH2 + 2 S-adenosyl-L-methionine = 2-methylsulfanyl-N(6)-dimethylallyladenosine(37) in tRNA + (sulfur carrier)-H + 5'-deoxyadenosine + L-methionine + A + S-adenosyl-L-homocysteine + 2 H(+). In terms of biological role, catalyzes the methylthiolation of N6-(dimethylallyl)adenosine (i(6)A), leading to the formation of 2-methylthio-N6-(dimethylallyl)adenosine (ms(2)i(6)A) at position 37 in tRNAs that read codons beginning with uridine. The protein is tRNA-2-methylthio-N(6)-dimethylallyladenosine synthase of Shewanella oneidensis (strain ATCC 700550 / JCM 31522 / CIP 106686 / LMG 19005 / NCIMB 14063 / MR-1).